Here is a 452-residue protein sequence, read N- to C-terminus: Peptidoglycan DL-endopeptidase CwlO (452 aa).

The signal sequence occupies residues 1–30; sequence MKKKVYTFGLASILGTASLFTPFMNNTASA. The segment covering 28 to 38 has biased composition (polar residues); it reads ASAETSQQKQE. Disordered stretches follow at residues 28–53 and 258–317; these read ASAE…IESK and AAAA…GSVV. Basic and acidic residues-rich tracts occupy residues 39-53 and 263-275; these read IQQK…IESK and KAKE…EKSD. A compositionally biased stretch (low complexity) spans 276-317; that stretch reads SGSSSSSNSGSVSKSDGSSNSGSSSSKKSSSPSRNYSSGSVV. The 130-residue stretch at 321–450 folds into the NlpC/P60 domain; that stretch reads GNAIEAAIST…KAFNGVVRRV (130 aa). Cys-358 (nucleophile) is an active-site residue. Catalysis depends on His-410, which acts as the Proton acceptor. Asn-422 is an active-site residue.

Belongs to the peptidase C40 family.

The protein resides in the secreted. Its function is as follows. Shows a cell wall hydrolytic DL-endopeptidase activity. The polypeptide is Peptidoglycan DL-endopeptidase CwlO (cwlO) (Bacillus licheniformis (strain ATCC 14580 / DSM 13 / JCM 2505 / CCUG 7422 / NBRC 12200 / NCIMB 9375 / NCTC 10341 / NRRL NRS-1264 / Gibson 46)).